A 184-amino-acid polypeptide reads, in one-letter code: MSYSKQDIERRMEGALASLASEFAGLRTGRASVNLLDSIQVPAYGGVTPLSQVASVTVSDTRMLSVNVWDKTVVGAADRAIRDSGLGLNPVMDGQTLRIPIPPLNEERRVELTKIAGKYAEAARVAVRNVRRDGMDDLKKAEKDGEISEDRHRALTEEVQKLTDAFVKRVDEALKAKEAEIMQV.

This sequence belongs to the RRF family.

The protein localises to the cytoplasm. In terms of biological role, responsible for the release of ribosomes from messenger RNA at the termination of protein biosynthesis. May increase the efficiency of translation by recycling ribosomes from one round of translation to another. The polypeptide is Ribosome-recycling factor (Hyphomonas neptunium (strain ATCC 15444)).